Here is a 221-residue protein sequence, read N- to C-terminus: Uracil-DNA glycosylase 1 (221 aa).

Residue aspartate 61 is the Proton acceptor of the active site.

The protein belongs to the uracil-DNA glycosylase (UDG) superfamily. UNG family.

It is found in the cytoplasm. It catalyses the reaction Hydrolyzes single-stranded DNA or mismatched double-stranded DNA and polynucleotides, releasing free uracil.. Its function is as follows. Excises uracil residues from the DNA which can arise as a result of misincorporation of dUMP residues by DNA polymerase or due to deamination of cytosine. The protein is Uracil-DNA glycosylase 1 of Listeria innocua serovar 6a (strain ATCC BAA-680 / CLIP 11262).